We begin with the raw amino-acid sequence, 290 residues long: Cytochrome bo(3) ubiquinol oxidase subunit 2 (290 aa).

Positions 1 to 24 (MISINFNNFFKTLLLILIAFTLHG) are cleaved as a signal peptide. Cysteine 25 carries the N-palmitoyl cysteine lipid modification. The S-diacylglycerol cysteine moiety is linked to residue cysteine 25. Residues 25-42 (CDSILFNPHGIIAIQECS) lie on the Extracellular side of the membrane. The chain crosses the membrane as a helical span at residues 43-63 (ILLISFLIMLFVIIPVIFMTI). At 64-87 (YFSVKYRASNINAKYKPDWCDSKK) the chain is on the cytoplasmic side. Residues 88 to 108 (IEIIVWTIPISIILFLAFVTW) traverse the membrane as a helical segment. Over 109-290 (NYSHILDPKK…TYSKNKVFKH (182 aa)) the chain is Extracellular.

Belongs to the cytochrome c oxidase subunit 2 family. As to quaternary structure, heterooctamer of two A chains, two B chains, two C chains and two D chains.

The protein resides in the cell membrane. Functionally, cytochrome bo(3) ubiquinol terminal oxidase is the component of the aerobic respiratory chain of E.coli that predominates when cells are grown at high aeration. Has proton pump activity across the membrane in addition to electron transfer, pumping 2 protons/electron. In Buchnera aphidicola subsp. Schizaphis graminum (strain Sg), this protein is Cytochrome bo(3) ubiquinol oxidase subunit 2 (cyoA).